The primary structure comprises 574 residues: Avenacosidase 1 (574 aa).

The transit peptide at 1–55 (MALLCSALSNSTHPSFRSHIGANSENLWHLSADPAQKSKRRCNLTLSSRAARISS) directs the protein to the chloroplast. A beta-D-glucoside is bound by residues Gln88, His192, and 237–238 (NE). Glu238 serves as the catalytic Proton donor. A disulfide bond links Cys258 and Cys264. A beta-D-glucoside contacts are provided by residues Tyr381, Glu454, Trp505, 512–513 (EW), and Phe521. Residue Glu454 is the Nucleophile of the active site.

It belongs to the glycosyl hydrolase 1 family. As to quaternary structure, homo- and heteromultimer with P60B in a 1:1 stoichiometry. Aggregates to form the fibrillar stromacentre. In terms of tissue distribution, expressed in caryopses, coleoptiles, primary leaves, and etiolated and green seedlings, but not in roots.

It is found in the plastid. Its subcellular location is the chloroplast stroma. It carries out the reaction avenacoside B + H2O = 26-desgluco-avenacoside B + D-glucose. Its activity is regulated as follows. Inhibited by N-(3-Dimethylaminopropyl)-N'-ethylcarbodiimide hydrochloride (EDC). Its function is as follows. Beta-glucosidase acting as a preformed defense system. Hydrolyzes the bisdesmosides avenacosides A and B to 26-desgluco-avenacosides exhibiting fungicidal activity. Can use beta-fucoside &gt; beta-glucoside &gt; beta-galactoside &gt; beta-xyloside as substrates, but not alpha-glycosides, beta-thioglucosides and disaccharides. This chain is Avenacosidase 1 (P60A), found in Avena sativa (Oat).